The following is a 519-amino-acid chain: Acetylcholine receptor subunit gamma (519 aa).

The N-terminal stretch at 1–22 (MHGGQGPQLLLLLLATCLGAQS) is a signal peptide. Residues 23-240 (RNQEERLLAD…VVFYLLIQRK (218 aa)) lie on the Extracellular side of the membrane. 2 N-linked (GlcNAc...) asparagine glycosylation sites follow: N52 and N163. Residues C150 and C164 are joined by a disulfide bond. The next 3 helical transmembrane spans lie at 241-265 (PLFY…IYFL), 274-292 (CTVA…FLVA), and 308-329 (YLTF…VLNV). Residues 330-476 (SLRSPHTHSM…WLLVGRVLDR (147 aa)) are Cytoplasmic-facing. The chain crosses the membrane as a helical span at residues 477 to 497 (VCFLAMLSLFICGTAGIFLMA).

The protein belongs to the ligand-gated ion channel (TC 1.A.9) family. Acetylcholine receptor (TC 1.A.9.1) subfamily. Gamma/CHRNG sub-subfamily. In terms of assembly, pentamer of two alpha chains, and one each of the beta, delta, and gamma (in immature muscle) or epsilon (in mature muscle) chains.

Its subcellular location is the postsynaptic cell membrane. The protein localises to the cell membrane. The catalysed reaction is K(+)(in) = K(+)(out). It catalyses the reaction Na(+)(in) = Na(+)(out). After binding acetylcholine, the AChR responds by an extensive change in conformation that affects all subunits and leads to opening of an ion-conducting channel across the plasma membrane. The chain is Acetylcholine receptor subunit gamma (Chrng) from Rattus norvegicus (Rat).